The chain runs to 1736 residues: Collagen alpha-2(XI) chain (1736 aa).

The signal sequence occupies residues 1 to 27 (MERCSRCHRLLLFLPLVLGLSAAPGWA). Residues 57–228 (DVAYRVARPA…QSCGQKDLEC (172 aa)) form the Laminin G-like domain. Residues 215–486 (QAAYQSCGQK…ILQQARLALR (272 aa)) form a nonhelical region region. Disordered stretches follow at residues 228–270 (CERE…PTES), 364–465 (LSAE…DKGP), and 485–1538 (LRGP…GSPA). Residues 258–269 (PQSQEPQKQPTE) show a composition bias toward polar residues. Collagen-like domains follow at residues 399 to 447 (GPPG…GPPG), 487 to 545 (GPPG…ADGA), and 546 to 583 (RGMP…GLPG). The interval 487-1500 (GPPGPMGYTG…PGHPGPPGEV (1014 aa)) is triple-helical region. Over residues 497–533 (RPGPLGQPGSPGLKGESGDLGPQGPRGPQGLTGPPGK) the composition is skewed to low complexity. Residues 615–624 (KGPPGIPGPP) are compositionally biased toward pro residues. Low complexity predominate over residues 650 to 668 (QQGTPGAQGLPGPQGAIGP). The Collagen-like 4 domain occupies 682-737 (GMPGSDGLPGHPGKEGPPGTKGNQGPSGPQGPLGYPGPRGVKGVDGIRGLKGHKGE). Positions 765–774 (RGEDGPEGPK) are enriched in basic and acidic residues. Composition is skewed to low complexity over residues 776–789 (RTGP…TGLM) and 842–861 (PTGP…SGAK). 5 consecutive Collagen-like domains span residues 868–924 (GPHG…PGPP), 967–1025 (GDPG…AAGS), 1026–1055 (GGPI…EKGP), 1056–1086 (IGPT…DGDK), and 1114–1172 (GPVG…ETGD). Residues 994-1003 (GTAGGPGLKG) are compositionally biased toward gly residues. Residues 1029–1040 (IGPPGRPGPQGP) show a composition bias toward pro residues. Composition is skewed to low complexity over residues 1115–1133 (PVGQ…ARGP) and 1155–1164 (IGLQGLPGPS). Residues 1176 to 1187 (MGPPGPPGPRGP) are compositionally biased toward pro residues. Residues 1188 to 1197 (AGPNGADGPQ) are compositionally biased toward low complexity. Residues 1198–1207 (GSPGGVGNLG) show a composition bias toward gly residues. Residues 1217–1230 (ESGSPGVQGEPGVK) show a composition bias toward low complexity. Positions 1232-1241 (PRGERGEKGE) are enriched in basic and acidic residues. Residues 1256–1272 (PTGDNGPKGNPGPVGFP) show a composition bias toward low complexity. The segment covering 1287–1296 (DGAKGDRGED) has biased composition (basic and acidic residues). Residues 1376-1386 (QQGRPGATGQA) are compositionally biased toward low complexity. 2 stretches are compositionally biased toward pro residues: residues 1388 to 1397 (PPGPVGPPGL) and 1457 to 1467 (PGGPPGLPGPS). Collagen-like domains follow at residues 1393–1447 (GPPG…GETG) and 1448–1499 (IPGA…PPGE). A compositionally biased stretch (low complexity) spans 1469–1481 (PKGAKGATGPAGP). Positions 1501 to 1736 (IQPLPIQMPK…VLLGPVCFMG (236 aa)) are cleaved as a propeptide — C-terminal propeptide. The Fibrillar collagen NC1 domain occupies 1541-1735 (EEIFGSLDSL…GVLLGPVCFM (195 aa)). Residues Cys1571 and Cys1603 are joined by a disulfide bond. Ca(2+)-binding residues include Asp1589, Asn1591, Gln1592, Cys1594, and Asp1597. N-linked (GlcNAc...) asparagine glycosylation occurs at Asn1604. Cystine bridges form between Cys1612–Cys1733 and Cys1655–Cys1689.

It belongs to the fibrillar collagen family. Trimers composed of three different chains: alpha 1(XI), alpha 2(XI), and alpha 3(XI). Alpha 3(XI) is a post-translational modification of alpha 1(II). Alpha 1(V) can also be found instead of alpha 3(XI)=1(II). Post-translationally, prolines at the third position of the tripeptide repeating unit (G-X-Y) are hydroxylated in some or all of the chains.

Its subcellular location is the secreted. It localises to the extracellular space. It is found in the extracellular matrix. May play an important role in fibrillogenesis by controlling lateral growth of collagen II fibrils. The sequence is that of Collagen alpha-2(XI) chain (Col11a2) from Mus musculus (Mouse).